The following is a 432-amino-acid chain: Tol-Pal system protein TolB (432 aa).

The signal sequence occupies residues 1 to 29 (MMRNVWKSGLRRSAWIGLLMVLCVGVARA).

This sequence belongs to the TolB family. As to quaternary structure, the Tol-Pal system is composed of five core proteins: the inner membrane proteins TolA, TolQ and TolR, the periplasmic protein TolB and the outer membrane protein Pal. They form a network linking the inner and outer membranes and the peptidoglycan layer.

Its subcellular location is the periplasm. Part of the Tol-Pal system, which plays a role in outer membrane invagination during cell division and is important for maintaining outer membrane integrity. The polypeptide is Tol-Pal system protein TolB (Ralstonia nicotianae (strain ATCC BAA-1114 / GMI1000) (Ralstonia solanacearum)).